We begin with the raw amino-acid sequence, 341 residues long: MATIKDVAKRAGVSTTTVSHVINKTRFVADETKAAVWEAIKELHYSPSAVARSLKVNHTKSIGLLATSSEAPYFAEVIESVENSCYGHGYTLILCNSHNNLEKQKAYLAMLAQKRVDGLLVMCSEYPENLLESLEDYRHIPMVVMDWGTRRSDFTDAIQDNAFEGGYLAGRYLIERGHRDIGAITGPVSRNTGGGRLRGFLKALQEASITPLESWLVEGDFEPESGYTAMQNILSQKQRPTAVFVGGDIMAMGAICAADEMGLRVPQDISVIGYDNVRNARYFTPALTTIHQPKERLGAMAFDMLLDRITSKREDAQTIEVHPKLVERRSVADGPFIDYRR.

The region spanning 2–56 (ATIKDVAKRAGVSTTTVSHVINKTRFVADETKAAVWEAIKELHYSPSAVARSLKV) is the HTH lacI-type domain. The H-T-H motif DNA-binding region spans 4–23 (IKDVAKRAGVSTTTVSHVIN). The DNA-binding element occupies 48-56 (SAVARSLKV). Residues tyrosine 73, arginine 190, threonine 192, phenylalanine 221, and aspartate 275 each contribute to the hypoxanthine site.

Homodimer.

Its pathway is purine metabolism; purine nucleotide biosynthesis [regulation]. Functionally, is the main repressor of the genes involved in the de novo synthesis of purine nucleotides, regulating purB, purC, purEK, purF, purHD, purL, purMN and guaBA expression. PurR is allosterically activated to bind its cognate DNA by binding the purine corepressors, hypoxanthine or guanine, thereby effecting transcription repression. The polypeptide is HTH-type transcriptional repressor PurR (Edwardsiella ictaluri (strain 93-146)).